Consider the following 1138-residue polypeptide: Exportin-6-B (1138 aa).

One can recognise an Importin N-terminal domain in the interval 31 to 97; that stretch reads IESLLNNFAQ…RSSLPKLLLS (67 aa). Over residues 291 to 307 the composition is skewed to low complexity; the sequence is SVTTNTTSSVVNGGSSS. Residues 291–315 form a disordered region; that stretch reads SVTTNTTSSVVNGGSSSPPLHSAAP.

This sequence belongs to the exportin family.

It is found in the nucleus. It localises to the cytoplasm. Functionally, mediates the nuclear export of actin and profilin-actin complexes in somatic cells. Oocyte nuclei lack active actin export. Mediates the nuclear export of actin and profilin-actin complexes in somatic cells. The chain is Exportin-6-B (xpo6-b) from Xenopus laevis (African clawed frog).